The chain runs to 206 residues: Large ribosomal subunit protein uL4 (206 aa).

Positions 49 to 73 (KTKTISEISGTTKKPFAQKGGGRAR) are disordered.

Belongs to the universal ribosomal protein uL4 family. In terms of assembly, part of the 50S ribosomal subunit.

Its function is as follows. One of the primary rRNA binding proteins, this protein initially binds near the 5'-end of the 23S rRNA. It is important during the early stages of 50S assembly. It makes multiple contacts with different domains of the 23S rRNA in the assembled 50S subunit and ribosome. Forms part of the polypeptide exit tunnel. The protein is Large ribosomal subunit protein uL4 of Paramagnetospirillum magneticum (strain ATCC 700264 / AMB-1) (Magnetospirillum magneticum).